The sequence spans 89 residues: Defensin-like protein 250 (89 aa).

The N-terminal stretch at 1–23 (MKLAAIFLVSCVLLSLLPSLTIA) is a signal peptide. 4 cysteine pairs are disulfide-bonded: Cys-29-Cys-86, Cys-40-Cys-69, Cys-48-Cys-79, and Cys-67-Cys-81.

Belongs to the DEFL family.

The protein resides in the secreted. This is Defensin-like protein 250 (SCRL8) from Arabidopsis thaliana (Mouse-ear cress).